The chain runs to 823 residues: Nuclear pore complex protein Nup93-1 (823 aa).

The protein belongs to the nucleoporin interacting component (NIC) family. Part of the nuclear pore complex (NPC). Interacts with msk (via C-terminus); this association might be facilitated by Nup75. Interacts with Mad (preferentially when phosphorylated). Interacts with Nup154 (via N-terminus). Interacts with the Polycomb group (PcG) proteins Pc and E(z).

The protein localises to the nucleus membrane. It localises to the nucleus. The protein resides in the nuclear pore complex. It is found in the nucleoplasm. Required for nuclear pore complex assembly, maintenance and function. Required for nuclear import of phosphorylated Mad via importin msk. Has no role in classical nuclear localization signal (cNLS)-dependent nuclear import via importin-beta. Mediates the association between the nuclear pore complex and a subclass of silenced regions bound by Polycomb group (PcG) proteins, enables long-range interactions between Polycomb loci and contributes to repression of polycomb targets. Together with Nup62 and Nup154, contributes to karyosome morphology and chromatin organization including attachment to the nuclear envelope in oocytes and nurse cells. The protein is Nuclear pore complex protein Nup93-1 of Drosophila melanogaster (Fruit fly).